The following is a 284-amino-acid chain: Bifunctional protein FolD (284 aa).

Residues 163-165, Ile188, and Ile229 contribute to the NADP(+) site; that span reads GAS.

The protein belongs to the tetrahydrofolate dehydrogenase/cyclohydrolase family. In terms of assembly, homodimer.

The enzyme catalyses (6R)-5,10-methylene-5,6,7,8-tetrahydrofolate + NADP(+) = (6R)-5,10-methenyltetrahydrofolate + NADPH. The catalysed reaction is (6R)-5,10-methenyltetrahydrofolate + H2O = (6R)-10-formyltetrahydrofolate + H(+). Its pathway is one-carbon metabolism; tetrahydrofolate interconversion. Functionally, catalyzes the oxidation of 5,10-methylenetetrahydrofolate to 5,10-methenyltetrahydrofolate and then the hydrolysis of 5,10-methenyltetrahydrofolate to 10-formyltetrahydrofolate. This chain is Bifunctional protein FolD, found in Nautilia profundicola (strain ATCC BAA-1463 / DSM 18972 / AmH).